A 190-amino-acid polypeptide reads, in one-letter code: uncharacterized protein (190 aa).

The chain crosses the membrane as a helical span at residues methionine 1–valine 21. Positions arginine 103–serine 114 are enriched in basic and acidic residues. Residues arginine 103–lysine 130 form a disordered region.

The protein to B.burgdorferi BB0265.

It is found in the membrane. This is an uncharacterized protein from Treponema pallidum (strain Nichols).